The primary structure comprises 513 residues: 2-isopropylmalate synthase (513 aa).

The region spanning 5–268 is the Pyruvate carboxyltransferase domain; it reads LIIFDTTLRD…DVGVDTTQIV (264 aa). The Mn(2+) site is built by D14, H202, H204, and N239. Residues 394 to 513 form a regulatory domain region; the sequence is RFVSLSQRSE…KSSEKLNPQI (120 aa).

This sequence belongs to the alpha-IPM synthase/homocitrate synthase family. LeuA type 1 subfamily. Homodimer. It depends on Mn(2+) as a cofactor.

The protein resides in the cytoplasm. It carries out the reaction 3-methyl-2-oxobutanoate + acetyl-CoA + H2O = (2S)-2-isopropylmalate + CoA + H(+). The protein operates within amino-acid biosynthesis; L-leucine biosynthesis; L-leucine from 3-methyl-2-oxobutanoate: step 1/4. Catalyzes the condensation of the acetyl group of acetyl-CoA with 3-methyl-2-oxobutanoate (2-ketoisovalerate) to form 3-carboxy-3-hydroxy-4-methylpentanoate (2-isopropylmalate). This is 2-isopropylmalate synthase from Ralstonia nicotianae (strain ATCC BAA-1114 / GMI1000) (Ralstonia solanacearum).